A 342-amino-acid chain; its full sequence is UDP-3-O-acylglucosamine N-acyltransferase (342 aa).

H243 functions as the Proton acceptor in the catalytic mechanism.

Belongs to the transferase hexapeptide repeat family. LpxD subfamily. Homotrimer.

The catalysed reaction is a UDP-3-O-[(3R)-3-hydroxyacyl]-alpha-D-glucosamine + a (3R)-hydroxyacyl-[ACP] = a UDP-2-N,3-O-bis[(3R)-3-hydroxyacyl]-alpha-D-glucosamine + holo-[ACP] + H(+). It participates in bacterial outer membrane biogenesis; LPS lipid A biosynthesis. Functionally, catalyzes the N-acylation of UDP-3-O-acylglucosamine using 3-hydroxyacyl-ACP as the acyl donor. Is involved in the biosynthesis of lipid A, a phosphorylated glycolipid that anchors the lipopolysaccharide to the outer membrane of the cell. This Coxiella burnetii (strain CbuK_Q154) (Coxiella burnetii (strain Q154)) protein is UDP-3-O-acylglucosamine N-acyltransferase.